Here is a 167-residue protein sequence, read N- to C-terminus: MSQRPNPSALIWLLLSAVVIGLDQWSKAWVLSSLPEYTPVPVIDGFWNWYRTYNTGAAFSFLSDAGGWQLWFFTALAVGISGLLAFWLSRTARGDWRSAVPYALVIGGAIGNVIDRLMHGHVVDFIQWYVGEHTWPSFNIADSAIVGGAIGIALFGLFDGKRSRKAG.

The next 3 helical transmembrane spans lie at 10-30 (LIWL…KAWV), 68-88 (WQLW…AFWL), and 98-118 (SAVP…DRLM). Active-site residues include D124 and D142. Residues 138 to 158 (FNIADSAIVGGAIGIALFGLF) traverse the membrane as a helical segment.

The protein belongs to the peptidase A8 family.

Its subcellular location is the cell inner membrane. The enzyme catalyses Release of signal peptides from bacterial membrane prolipoproteins. Hydrolyzes -Xaa-Yaa-Zaa-|-(S,diacylglyceryl)Cys-, in which Xaa is hydrophobic (preferably Leu), and Yaa (Ala or Ser) and Zaa (Gly or Ala) have small, neutral side chains.. Its pathway is protein modification; lipoprotein biosynthesis (signal peptide cleavage). Its function is as follows. This protein specifically catalyzes the removal of signal peptides from prolipoproteins. The chain is Lipoprotein signal peptidase from Xanthomonas campestris pv. campestris (strain 8004).